The primary structure comprises 200 residues: Probable GTP-binding protein EngB (200 aa).

Residues 22–197 form the EngB-type G domain; the sequence is DLPEIAFAGR…WQAIQDAVEE (176 aa). Residues 30–37, 57–61, 78–81, 145–148, and 176–178 contribute to the GTP site; these read GRSNVGKS, GRTQL, DLPG, TKCD, and FSA. 2 residues coordinate Mg(2+): serine 37 and threonine 59.

It belongs to the TRAFAC class TrmE-Era-EngA-EngB-Septin-like GTPase superfamily. EngB GTPase family. Mg(2+) is required as a cofactor.

In terms of biological role, necessary for normal cell division and for the maintenance of normal septation. In Trichlorobacter lovleyi (strain ATCC BAA-1151 / DSM 17278 / SZ) (Geobacter lovleyi), this protein is Probable GTP-binding protein EngB.